The primary structure comprises 891 residues: MLLGEEDIIQALSTAQTDFLDALAEGPEAVLTFQTRWGVLRASIDSDLPLQPSTLELSDRVSYAIADLAEVLLTQEANNKAIEDDLSNDLVAQFHQYEAFEALEFSENDCEWQENMPPVPPFIGACYEWLLQHLHNPYPSNEGRLTPPSSPRSACSILPSLKPALDTCKTFDDIDRWFSAARIRIGWTHICDTKFGGDKAMMLEAARVMWGSSDEEYEERNFAAGCVSRRSVSPKREEIPSYLKSPHDSIAFQARLPEAHEEPAERHCTPPREPPCLDPDVELAFACMETRAHEMYAHRLEPSELVDTLSASALPREAVNDVECQEAIARAAHEKRQQARREQRQAKNERDAAQMREEQRASYPSPEPSSDDEGEDEDDEESTDAYDSEASDSEDDSDSDTDSHYSQPFASYARGRTSFLSDVSALADDEDEASDDDEDDNVEGDDESEEEEEEEDTTPPPKLAGSKRRADEDIDGQAEEKRLRSASVPHFMYPPSPKSPMVVKRAAHKRPTRRASPSLIRLSPPPAPVTMGPDGVPLGTVPSKTTKAPASTSTTKSSTVQVHIPLPAPSSRSIPSSGIKVTGDPTPWVNWDLNAAVPCGQSKAEYLDSVGSSRPQRRASTSSSSSTSSSLSRTPSLTSLSSLSSGSSVSTCETVGTDSSEPAVHVQASETATEAPIKSAAHVHPLFNPDVWSQYNLDATADVEFHRGKGRKASSFRPAKLLVEAVDLSTSPSQHWTPSVRSRTRLAPSVAAPVTSYHHAAGTVTSPIESSFGQGQLTSILSTGPKAGITRRQTPPAKRRVSPRAQEPVEPSSLVDDIISSGLVVVCKEITPVKAPKKDRRYAERAERRASKANSFDSPDTVRARLAEIEQEAARLEAERLSLQRIASVGG.

The segment at residues 111-189 (EWQENMPPVP…AARIRIGWTH (79 aa)) is a DNA-binding region (homeobox; TALE-type). Residues 331-360 (AAHEKRQQARREQRQAKNERDAAQMREEQR) show a composition bias toward basic and acidic residues. 4 disordered regions span residues 331 to 592 (AAHE…VNWD), 606 to 671 (YLDS…ASET), 779 to 812 (SILS…VEPS), and 836 to 861 (PKKD…SPDT). Composition is skewed to acidic residues over residues 369-400 (SSDD…SDSD) and 427-457 (ADDE…EEDT). Composition is skewed to low complexity over residues 542 to 559 (PSKT…KSST) and 612 to 650 (SSRP…SSVS). The segment covering 651-660 (TCETVGTDSS) has biased composition (polar residues). The span at 841 to 850 (RYAERAERRA) shows a compositional bias: basic and acidic residues.

It belongs to the TALE/M-ATYP homeobox family.

The protein localises to the nucleus. In terms of biological role, specifies A-alpha-3 mating-type. May regulate the expression of genes specific to the homokaryotic cell type. The chain is Mating-type protein A-alpha Z3 from Schizophyllum commune (Split gill fungus).